The primary structure comprises 1342 residues: DNA-directed RNA polymerase subunit beta (1342 aa).

K1022 and K1200 each carry N6-acetyllysine.

The protein belongs to the RNA polymerase beta chain family. The RNAP catalytic core consists of 2 alpha, 1 beta, 1 beta' and 1 omega subunit. When a sigma factor is associated with the core the holoenzyme is formed, which can initiate transcription.

It catalyses the reaction RNA(n) + a ribonucleoside 5'-triphosphate = RNA(n+1) + diphosphate. DNA-dependent RNA polymerase catalyzes the transcription of DNA into RNA using the four ribonucleoside triphosphates as substrates. The polypeptide is DNA-directed RNA polymerase subunit beta (Escherichia coli O81 (strain ED1a)).